A 171-amino-acid chain; its full sequence is Peptide methionine sulfoxide reductase MsrA (171 aa).

Residue Cys-12 is part of the active site.

It belongs to the MsrA Met sulfoxide reductase family.

It catalyses the reaction L-methionyl-[protein] + [thioredoxin]-disulfide + H2O = L-methionyl-(S)-S-oxide-[protein] + [thioredoxin]-dithiol. The catalysed reaction is [thioredoxin]-disulfide + L-methionine + H2O = L-methionine (S)-S-oxide + [thioredoxin]-dithiol. Its function is as follows. Has an important function as a repair enzyme for proteins that have been inactivated by oxidation. Catalyzes the reversible oxidation-reduction of methionine sulfoxide in proteins to methionine. The polypeptide is Peptide methionine sulfoxide reductase MsrA (Leuconostoc mesenteroides subsp. mesenteroides (strain ATCC 8293 / DSM 20343 / BCRC 11652 / CCM 1803 / JCM 6124 / NCDO 523 / NBRC 100496 / NCIMB 8023 / NCTC 12954 / NRRL B-1118 / 37Y)).